A 201-amino-acid polypeptide reads, in one-letter code: Large ribosomal subunit protein uL18 (201 aa).

Belongs to the universal ribosomal protein uL18 family. As to quaternary structure, part of the 50S ribosomal subunit. Contacts the 5S and 23S rRNAs.

Its function is as follows. This is one of the proteins that bind and probably mediate the attachment of the 5S RNA into the large ribosomal subunit, where it forms part of the central protuberance. This is Large ribosomal subunit protein uL18 from Thermococcus kodakarensis (strain ATCC BAA-918 / JCM 12380 / KOD1) (Pyrococcus kodakaraensis (strain KOD1)).